A 462-amino-acid polypeptide reads, in one-letter code: GTPase Der (462 aa).

EngA-type G domains lie at 3 to 170 (ITIA…TSQK) and 201 to 372 (IKIA…FNSI). Residues 9–16 (GRTNVGKS), 57–61 (DTPGI), 122–125 (NKIE), 207–214 (GKPNVGKS), 254–258 (DTAGI), and 319–322 (NKND) each bind GTP. A KH-like domain is found at 373–457 (KKIHTSKITE…SIVLYFKSSK (85 aa)).

This sequence belongs to the TRAFAC class TrmE-Era-EngA-EngB-Septin-like GTPase superfamily. EngA (Der) GTPase family. Associates with the 50S ribosomal subunit.

In terms of biological role, GTPase that plays an essential role in the late steps of ribosome biogenesis. The chain is GTPase Der from Buchnera aphidicola subsp. Baizongia pistaciae (strain Bp).